The following is a 455-amino-acid chain: Bifunctional protein GlmU (455 aa).

Positions 1–227 (MGLSVIILAA…CEEVQGVNDR (227 aa)) are pyrophosphorylase. UDP-N-acetyl-alpha-D-glucosamine contacts are provided by residues 8–11 (LAAG), Lys-22, Gln-73, 78–79 (GT), 100–102 (YGD), Gly-137, Glu-152, Asn-167, and Asn-225. Asp-102 is a Mg(2+) binding site. Asn-225 contacts Mg(2+). Residues 228 to 248 (WELTKLERYYQRLMAKKLSLA) form a linker region. Residues 249-455 (GVTIIDPERF…KGWHRPTKKE (207 aa)) are N-acetyltransferase. UDP-N-acetyl-alpha-D-glucosamine contacts are provided by Arg-332 and Lys-350. His-362 serves as the catalytic Proton acceptor. UDP-N-acetyl-alpha-D-glucosamine is bound by residues Tyr-365 and Asn-376. Acetyl-CoA is bound by residues Ala-379, 385 to 386 (NY), Ser-404, Ala-422, and Arg-439.

It in the N-terminal section; belongs to the N-acetylglucosamine-1-phosphate uridyltransferase family. In the C-terminal section; belongs to the transferase hexapeptide repeat family. As to quaternary structure, homotrimer. Mg(2+) serves as cofactor.

The protein localises to the cytoplasm. The enzyme catalyses alpha-D-glucosamine 1-phosphate + acetyl-CoA = N-acetyl-alpha-D-glucosamine 1-phosphate + CoA + H(+). It catalyses the reaction N-acetyl-alpha-D-glucosamine 1-phosphate + UTP + H(+) = UDP-N-acetyl-alpha-D-glucosamine + diphosphate. It functions in the pathway nucleotide-sugar biosynthesis; UDP-N-acetyl-alpha-D-glucosamine biosynthesis; N-acetyl-alpha-D-glucosamine 1-phosphate from alpha-D-glucosamine 6-phosphate (route II): step 2/2. It participates in nucleotide-sugar biosynthesis; UDP-N-acetyl-alpha-D-glucosamine biosynthesis; UDP-N-acetyl-alpha-D-glucosamine from N-acetyl-alpha-D-glucosamine 1-phosphate: step 1/1. The protein operates within bacterial outer membrane biogenesis; LPS lipid A biosynthesis. In terms of biological role, catalyzes the last two sequential reactions in the de novo biosynthetic pathway for UDP-N-acetylglucosamine (UDP-GlcNAc). The C-terminal domain catalyzes the transfer of acetyl group from acetyl coenzyme A to glucosamine-1-phosphate (GlcN-1-P) to produce N-acetylglucosamine-1-phosphate (GlcNAc-1-P), which is converted into UDP-GlcNAc by the transfer of uridine 5-monophosphate (from uridine 5-triphosphate), a reaction catalyzed by the N-terminal domain. This chain is Bifunctional protein GlmU, found in Coxiella burnetii (strain Dugway 5J108-111).